The primary structure comprises 359 residues: MRYSDSYHTTGRWQPRASTEGFPMGVSIEVNGLTKSFGSSRIWEDVTLTIPAGEVSVLLGPSGTGKSVFLKSLIGLLRPERGSIIIDGTDIIECSAKELYEIRTLFGVLFQDGALFGSMNLYDNTAFPLREHTKKKESEIRDIVMEKLALVGLGGDEKKFPGEISGGMRKRAGLARALVLDPQIILCDEPDSGLDPVRTAYLSQLIMDINAQIDATILIVTHNINIARTVPDNMGMLFRKHLVMFGPREVLLTSDEPVVRQFLNGRRIGPIGMSEEKDEATMAEEQALLDAGHHAGGVEEIEGVPPQISATPGMPERKAVARRQARVREMLHTLPKKAQAAILDDLEGTHKYAVHEIGQ.

In terms of domain architecture, ABC transporter spans I28–N264. Residue G60–S67 coordinates ATP.

This sequence belongs to the ABC transporter superfamily.

In terms of biological role, not known, could be involved in the transport of ribonucleotides. The sequence is that of Probable ribonucleotide transport ATP-binding protein mkl (mkl) from Mycobacterium bovis (strain ATCC BAA-935 / AF2122/97).